We begin with the raw amino-acid sequence, 195 residues long: Molybdenum cofactor guanylyltransferase (195 aa).

GTP is bound by residues 12–14 (LAG), Lys25, Asn53, Asp70, and Asp100. Residue Asp100 participates in Mg(2+) binding.

This sequence belongs to the MobA family. As to quaternary structure, monomer. Requires Mg(2+) as cofactor.

The protein resides in the cytoplasm. The catalysed reaction is Mo-molybdopterin + GTP + H(+) = Mo-molybdopterin guanine dinucleotide + diphosphate. Transfers a GMP moiety from GTP to Mo-molybdopterin (Mo-MPT) cofactor (Moco or molybdenum cofactor) to form Mo-molybdopterin guanine dinucleotide (Mo-MGD) cofactor. In Vibrio campbellii (strain ATCC BAA-1116), this protein is Molybdenum cofactor guanylyltransferase.